The following is a 61-amino-acid chain: MAHPKRRQSKTRTAKRRTHDKAVMPTLAKCPNCGAWHIYHTVCGDCGYYRGKLAIEKEVAV.

The span at 1 to 19 (MAHPKRRQSKTRTAKRRTH) shows a compositional bias: basic residues. Residues 1 to 20 (MAHPKRRQSKTRTAKRRTHD) are disordered.

The protein belongs to the bacterial ribosomal protein bL32 family.

The protein is Large ribosomal subunit protein bL32 of Porphyromonas gingivalis (strain ATCC 33277 / DSM 20709 / CIP 103683 / JCM 12257 / NCTC 11834 / 2561).